A 393-amino-acid polypeptide reads, in one-letter code: S-adenosylmethionine synthase (393 aa).

His16 serves as a coordination point for ATP. Residue Asp18 participates in Mg(2+) binding. Glu44 provides a ligand contact to K(+). L-methionine is bound by residues Glu57 and Gln100. The interval 100-110 (QSNDIAQGVDH) is flexible loop. ATP-binding positions include 167–169 (DAK), 238–239 (RF), Asp247, 253–254 (RK), Ala270, and Lys274. Asp247 is an L-methionine binding site. Lys278 is an L-methionine binding site.

The protein belongs to the AdoMet synthase family. In terms of assembly, homotetramer; dimer of dimers. It depends on Mg(2+) as a cofactor. K(+) serves as cofactor.

It localises to the cytoplasm. The catalysed reaction is L-methionine + ATP + H2O = S-adenosyl-L-methionine + phosphate + diphosphate. It functions in the pathway amino-acid biosynthesis; S-adenosyl-L-methionine biosynthesis; S-adenosyl-L-methionine from L-methionine: step 1/1. Its function is as follows. Catalyzes the formation of S-adenosylmethionine (AdoMet) from methionine and ATP. The overall synthetic reaction is composed of two sequential steps, AdoMet formation and the subsequent tripolyphosphate hydrolysis which occurs prior to release of AdoMet from the enzyme. The sequence is that of S-adenosylmethionine synthase from Polaromonas sp. (strain JS666 / ATCC BAA-500).